Here is a 115-residue protein sequence, read N- to C-terminus: Promotilin (115 aa).

Positions 1–25 (MVSRKAVAALLVVHAPAMLASQTEA) are cleaved as a signal peptide. The segment at 40-74 (EKERSKGQKKSLSVWQRSGEEGPVDPAEPIEEEGN) is disordered.

It belongs to the motilin family.

The protein resides in the secreted. In terms of biological role, plays an important role in the regulation of interdigestive gastrointestinal motility and indirectly causes rhythmic contraction of duodenal and colonic smooth muscle. This chain is Promotilin (MLN), found in Macaca mulatta (Rhesus macaque).